Consider the following 432-residue polypeptide: E3 ubiquitin-protein ligase RNF135 (432 aa).

An RING-type zinc finger spans residues 21–63; it reads CIICQGLLDWPATLPCGHSFCRHCLEALWGARDARRWACPTCR. A disordered region spans residues 95-121; that stretch reads GSDPAHCPCPGSSSLSSAAARPRRRPE. The segment covering 102–114 has biased composition (low complexity); sequence PCPGSSSLSSAAA. 2 coiled-coil regions span residues 121-156 and 191-216; these read ELQR…QNQR and DTAA…ESVT. The region spanning 241 to 432 is the B30.2/SPRY domain; sequence PDQSHPALRR…NYLIIKQVKV (192 aa).

Homodimer. Interacts (homodimer) with RIGI (double-stranded RNA-bound oligomeric form); involved in both RIGI ubiquitination, oligomerization into filaments associated with viral RNAs and the bridging of these filaments. Interacts with UBE2D3 and UBE2N; E2 ubiquitin ligases involved in RNF135-mediated ubiquitination of RIGI and activation of the RIG-I signaling pathway. Interacts with PCBP2. (Microbial infection) Cleaved and inactivated by hepatitis C virus NS3/NS4A. As to expression, expressed in skeletal muscle, spleen, kidney, placenta, prostate, stomach, thyroid and tongue. Also weakly expressed in heart, thymus, liver and lung.

It localises to the cytoplasm. Its subcellular location is the stress granule. The catalysed reaction is S-ubiquitinyl-[E2 ubiquitin-conjugating enzyme]-L-cysteine + [acceptor protein]-L-lysine = [E2 ubiquitin-conjugating enzyme]-L-cysteine + N(6)-ubiquitinyl-[acceptor protein]-L-lysine.. Its pathway is protein modification; protein ubiquitination. Its function is as follows. E2-dependent E3 ubiquitin-protein ligase that functions as a RIGI coreceptor in the sensing of viral RNAs in cell cytoplasm and the activation of the antiviral innate immune response. Together with the UBE2D3, UBE2N and UB2V1 E2 ligases, catalyzes the 'Lys-63'-linked polyubiquitination of RIGI oligomerized on viral RNAs, an essential step in the activation of the RIG-I signaling pathway. Through a ubiquitin-independent parallel mechanism, which consists in bridging RIGI filaments forming on longer viral RNAs, further activates the RIG-I signaling pathway. This second mechanism that synergizes with the ubiquitin-dependent one would thereby allow an RNA length-dependent regulation of the RIG-I signaling pathway. Associated with the E2 ligase UBE2N, also constitutively synthesizes unanchored 'Lys-63'-linked polyubiquitin chains that may also activate the RIG-I signaling pathway. In Homo sapiens (Human), this protein is E3 ubiquitin-protein ligase RNF135.